The chain runs to 161 residues: Small ribosomal subunit protein uS19 (161 aa).

Residues methionine 1–glutamine 19 are compositionally biased toward basic residues. A disordered region spans residues methionine 1–arginine 26.

This sequence belongs to the universal ribosomal protein uS19 family.

In terms of biological role, protein S19 forms a complex with S13 that binds strongly to the 16S ribosomal RNA. In Methanococcus maripaludis (strain C6 / ATCC BAA-1332), this protein is Small ribosomal subunit protein uS19.